A 197-amino-acid polypeptide reads, in one-letter code: Ribose 1,5-bisphosphate phosphokinase PhnN (197 aa).

An ATP-binding site is contributed by 21–28 (GPSGAGKD).

Belongs to the ribose 1,5-bisphosphokinase family.

The enzyme catalyses alpha-D-ribose 1,5-bisphosphate + ATP = 5-phospho-alpha-D-ribose 1-diphosphate + ADP. Its pathway is metabolic intermediate biosynthesis; 5-phospho-alpha-D-ribose 1-diphosphate biosynthesis; 5-phospho-alpha-D-ribose 1-diphosphate from D-ribose 5-phosphate (route II): step 3/3. Its function is as follows. Catalyzes the phosphorylation of ribose 1,5-bisphosphate to 5-phospho-D-ribosyl alpha-1-diphosphate (PRPP). This chain is Ribose 1,5-bisphosphate phosphokinase PhnN, found in Rhizobium etli (strain CIAT 652).